Reading from the N-terminus, the 488-residue chain is 5'-3' exonuclease PLD3 (488 aa).

The Cytoplasmic segment spans residues 1 to 38 (MKPKLMYQELKVPVEEPAGELPMNEIEAWKAAEKKARW). The helical; Signal-anchor for type II membrane protein transmembrane segment at 39-59 (VLLVLILAVVGFGALMTQLFL) threads the bilayer. Topologically, residues 60–488 (WEYGDLHLFG…DSVGNACRLL (429 aa)) are lumenal. Disulfide bonds link Cys77-Cys237 and Cys81-Cys235. N-linked (GlcNAc...) asparagine glycans are attached at residues Asn97 and Asn132. The PLD phosphodiesterase 1 domain occupies 194 to 221 (THGVLHTKFWVVDQTHFYLGSANMDWRS). Active-site residues include His199, Lys201, and Asp206. The Proton donor role is filled by His199. Positions 199 and 201 each coordinate phosphate. Asn216 is a binding site for phosphate. Residues Asn234, Asn282, and Asn385 are each glycosylated (N-linked (GlcNAc...) asparagine). Cys364 and Cys485 are oxidised to a cystine. Positions 409–435 (YARVNHNKYMVTERTTYIGTSNWSGSY) constitute a PLD phosphodiesterase 2 domain. Residue His414 participates in phosphate binding. His414 (nucleophile) is an active-site residue. Position 436 (Phe436) interacts with Mg(2+).

This sequence belongs to the phospholipase D family. In terms of assembly, homodimer. Interacts with APP. N-glycosylated. In terms of processing, proteolytically processed to a soluble form that is stable within endosomes and lysosomes. During transport through the secretory pathway becomes proteolysed by cysteine proteases, thereby releasing a stable soluble lysosomal lumenal polypeptide, whereas the transmembrane-bound fragment is rapidly degraded. Its transport route to lysosomes involves ubiquitination and the ESCRT complex. Post-translationally, ubiquitinated. Ubiquitination mediates sorting into lysosomes.

The protein localises to the endoplasmic reticulum membrane. It localises to the lysosome lumen. The protein resides in the early endosome membrane. Its subcellular location is the late endosome membrane. It is found in the golgi apparatus membrane. The protein localises to the endosome membrane. The enzyme catalyses Exonucleolytic cleavage in the 5'- to 3'-direction to yield nucleoside 3'-phosphates.. It catalyses the reaction a 5'-end 5'-dephospho-ribonucleotidyl-ribonucleotide-RNA + H2O = a ribonucleoside 3'-phosphate + a 5'-end dephospho-ribonucleoside-RNA + H(+). The catalysed reaction is a ribonucleoside 3'-phosphate-2'-3'-cyclophospho-GMP + H2O = a ribonucleoside 3'-phosphate + 2',3'-cyclophospho-GMP + H(+). It carries out the reaction a 5'-end 5'-dephospho-2'-deoxyribonucleotidyl-2'-deoxyribonucleotide in single-stranded DNA + H2O = a 5'-end dephospho-2'-deoxyribonucleoside in single-stranded DNA + a 2'-deoxyribonucleoside 3'-phosphate + H(+). The enzyme catalyses a 5'-end 5'-phospho-2'-deoxyribonucleotide in single-stranded DNA + H2O = a 5'-end 5'-dephospho-2'-deoxyribonucleotide in single-stranded DNA + phosphate. It catalyses the reaction a 3-lyso-sn-glycero-1-phospho-(3'-acyl-1'-sn-glycerol) + a 1-acyl-sn-glycerol = a 3-acyl-sn-glycero-1-phospho-(3'-acyl-1'-sn-glycerol) + glycerol. The catalysed reaction is 3-lyso-sn-glycero-1-phospho-(3'-(9Z-octadecenoyl)-1'-sn-glycerol) + 1-(9Z-octadecenoyl)-sn-glycerol = 3-(9Z-octadecenoyl)-sn-glycero-1-phospho-(3'-(9Z-octadecenoyl)-1'-sn-glycerol) + glycerol. 5'-&gt;3' exonuclease that hydrolyzes the phosphodiester bond of single-stranded DNA (ssDNA) and RNA molecules to form nucleoside 3'-monophosphates and 5'-end 5'-hydroxy deoxyribonucleotide/ribonucleotide fragments. Partially redundant with PLD4, can cleave all four nucleotides displaying higher efficiency for ssDNA and RNA fragments initiated with uridine and guanosine residues and lower efficiency for cytidine-initiated substrates. As a result, it does not always degrade polynucleotides to the single nucleotide level, it can stall at specific sites sparing certain fragments from exonucleolytic degradation. Processes self and pathogenic ssDNA and RNA molecules that reach the endolysosomal compartment via phagocytosis or autophagy and may serve as 'danger' signals for recognition by innate immune receptors such as toll-like receptors (TLRs). Degrades mitochondrial CpG-rich ssDNA fragments to prevent TLR9 activation and autoinflammatory response, but it can cleave viral RNA to generate ligands for TLR7 activation and initiate antiviral immune responses. In plasmacytoid dendritic cells, it cooperates with endonuclease RNASET2 to release 2',3'-cyclic guanosine monophosphate (2',3'-cGMP), a potent stimulatory ligand for TLR7. Produces 2',3'-cGMPs and cytidine-rich RNA fragments that occupy TLR7 ligand-binding pockets and trigger a signaling-competent state. Can exert polynucleotide phosphatase activity toward 5'-phosphorylated ssDNA substrates although at a slow rate. Transphosphatidylase that catalyzes the exchange with R to S stereo-inversion of the glycerol moiety between (S,R)-lysophosphatidylglycerol (LPG) and monoacylglycerol (MAG) substrates to yield (S,S)-bis(monoacylglycero)phosphate (BMP). Can synthesize a variety of (S,S)-BMPs representing the main phospholipid constituent of lysosomal intralumenal vesicle (ILV) membranes that bind acid hydrolases for lipid degradation. Regulates the homeostasis and interorganellar communication of the endolysosomal system with an overall impact on cellular removal of dysfunctional organelles via autophagy as well as proper protein and lipid turnover. May play a role in myotube formation in response to ER stress. The chain is 5'-3' exonuclease PLD3 (Pld3) from Rattus norvegicus (Rat).